Consider the following 465-residue polypeptide: UDP-N-acetylmuramoylalanine--D-glutamate ligase (465 aa).

124 to 130 (GSDGKTT) contacts ATP.

Belongs to the MurCDEF family.

It localises to the cytoplasm. It catalyses the reaction UDP-N-acetyl-alpha-D-muramoyl-L-alanine + D-glutamate + ATP = UDP-N-acetyl-alpha-D-muramoyl-L-alanyl-D-glutamate + ADP + phosphate + H(+). It functions in the pathway cell wall biogenesis; peptidoglycan biosynthesis. In terms of biological role, cell wall formation. Catalyzes the addition of glutamate to the nucleotide precursor UDP-N-acetylmuramoyl-L-alanine (UMA). The chain is UDP-N-acetylmuramoylalanine--D-glutamate ligase from Ruminiclostridium cellulolyticum (strain ATCC 35319 / DSM 5812 / JCM 6584 / H10) (Clostridium cellulolyticum).